A 75-amino-acid chain; its full sequence is DNA-directed RNA polymerase subunit omega (75 aa).

This sequence belongs to the RNA polymerase subunit omega family. As to quaternary structure, in cyanobacteria the RNAP catalytic core is composed of 2 alpha, 1 beta, 1 beta', 1 gamma and 1 omega subunit. When a sigma factor is associated with the core the holoenzyme is formed, which can initiate transcription.

It catalyses the reaction RNA(n) + a ribonucleoside 5'-triphosphate = RNA(n+1) + diphosphate. Promotes RNA polymerase assembly. Latches the N- and C-terminal regions of the beta' subunit thereby facilitating its interaction with the beta and alpha subunits. This Gloeothece citriformis (strain PCC 7424) (Cyanothece sp. (strain PCC 7424)) protein is DNA-directed RNA polymerase subunit omega.